A 127-amino-acid polypeptide reads, in one-letter code: Cystatin cpi-1 (127 aa).

The first 19 residues, 1-19, serve as a signal peptide directing secretion; the sequence is MFFPIVWLSVLLIISKSFA. A Secondary area of contact motif is present at residues 68-72; sequence QVVAG. A disulfide bridge links C86 with C98.

The protein belongs to the cystatin family.

Functionally, cysteine protease inhibitor which inhibits members of the peptidase C1 family. Does not inhibit asparaginyl endopeptidase. This chain is Cystatin cpi-1, found in Brugia malayi (Filarial nematode worm).